A 613-amino-acid chain; its full sequence is UvrABC system protein C (613 aa).

A GIY-YIG domain is found at 13 to 92; the sequence is DKSGVYIMKD…IKKYKPKYNI (80 aa). One can recognise a UVR domain in the interval 204 to 239; the sequence is DEIINDLRIQMETAAEQLDFEKAAQLRNKITSIKQL.

This sequence belongs to the UvrC family. In terms of assembly, interacts with UvrB in an incision complex.

The protein localises to the cytoplasm. Functionally, the UvrABC repair system catalyzes the recognition and processing of DNA lesions. UvrC both incises the 5' and 3' sides of the lesion. The N-terminal half is responsible for the 3' incision and the C-terminal half is responsible for the 5' incision. In Ruminiclostridium cellulolyticum (strain ATCC 35319 / DSM 5812 / JCM 6584 / H10) (Clostridium cellulolyticum), this protein is UvrABC system protein C.